A 342-amino-acid chain; its full sequence is Ribosomal RNA small subunit methyltransferase C (342 aa).

Belongs to the methyltransferase superfamily. RsmC family. In terms of assembly, monomer.

Its subcellular location is the cytoplasm. The enzyme catalyses guanosine(1207) in 16S rRNA + S-adenosyl-L-methionine = N(2)-methylguanosine(1207) in 16S rRNA + S-adenosyl-L-homocysteine + H(+). In terms of biological role, specifically methylates the guanine in position 1207 of 16S rRNA in the 30S particle. This chain is Ribosomal RNA small subunit methyltransferase C, found in Klebsiella pneumoniae subsp. pneumoniae (strain ATCC 700721 / MGH 78578).